Reading from the N-terminus, the 380-residue chain is N5-carboxyaminoimidazole ribonucleotide synthase (380 aa).

ATP is bound by residues Arg108, Lys148, 153–159, 183–186, Glu191, His214, and 268–269; these read GYDGKGQ, ESWV, and NE. The 187-residue stretch at 112–298 folds into the ATP-grasp domain; sequence KKAIQSAGCE…QFEQHIRAVC (187 aa).

It belongs to the PurK/PurT family. In terms of assembly, homodimer.

The enzyme catalyses 5-amino-1-(5-phospho-beta-D-ribosyl)imidazole + hydrogencarbonate + ATP = 5-carboxyamino-1-(5-phospho-D-ribosyl)imidazole + ADP + phosphate + 2 H(+). It functions in the pathway purine metabolism; IMP biosynthesis via de novo pathway; 5-amino-1-(5-phospho-D-ribosyl)imidazole-4-carboxylate from 5-amino-1-(5-phospho-D-ribosyl)imidazole (N5-CAIR route): step 1/2. In terms of biological role, catalyzes the ATP-dependent conversion of 5-aminoimidazole ribonucleotide (AIR) and HCO(3)(-) to N5-carboxyaminoimidazole ribonucleotide (N5-CAIR). This chain is N5-carboxyaminoimidazole ribonucleotide synthase, found in Bacillus subtilis (strain 168).